We begin with the raw amino-acid sequence, 339 residues long: DNA-directed RNA polymerase subunit alpha (339 aa).

Positions 1-233 are alpha N-terminal domain (alpha-NTD); sequence MVREEVAGST…DLFLPFLHAE (233 aa). The interval 264 to 339 is alpha C-terminal domain (alpha-CTD); it reads KKGIPLNSIF…IDLLKNKLSF (76 aa).

This sequence belongs to the RNA polymerase alpha chain family. In plastids the minimal PEP RNA polymerase catalytic core is composed of four subunits: alpha, beta, beta', and beta''. When a (nuclear-encoded) sigma factor is associated with the core the holoenzyme is formed, which can initiate transcription.

The protein resides in the plastid. It localises to the chloroplast. The enzyme catalyses RNA(n) + a ribonucleoside 5'-triphosphate = RNA(n+1) + diphosphate. In terms of biological role, DNA-dependent RNA polymerase catalyzes the transcription of DNA into RNA using the four ribonucleoside triphosphates as substrates. In Aegilops tauschii (Tausch's goatgrass), this protein is DNA-directed RNA polymerase subunit alpha.